Reading from the N-terminus, the 618-residue chain is Isocitrate dehydrogenase kinase/phosphatase (618 aa).

ATP-binding positions include 332 to 338 (APGIKGM) and Lys-353. Residue Asp-388 is part of the active site.

This sequence belongs to the AceK family.

It is found in the cytoplasm. The catalysed reaction is L-seryl-[isocitrate dehydrogenase] + ATP = O-phospho-L-seryl-[isocitrate dehydrogenase] + ADP + H(+). Its function is as follows. Bifunctional enzyme which can phosphorylate or dephosphorylate isocitrate dehydrogenase (IDH) on a specific serine residue. This is a regulatory mechanism which enables bacteria to bypass the Krebs cycle via the glyoxylate shunt in response to the source of carbon. When bacteria are grown on glucose, IDH is fully active and unphosphorylated, but when grown on acetate or ethanol, the activity of IDH declines drastically concomitant with its phosphorylation. This Methylibium petroleiphilum (strain ATCC BAA-1232 / LMG 22953 / PM1) protein is Isocitrate dehydrogenase kinase/phosphatase.